The primary structure comprises 530 residues: Probable cytochrome P450 519A1 (530 aa).

A helical transmembrane segment spans residues 1 to 21 (MESIINLIFYIIIFLILIDFL). Cysteine 476 contributes to the heme binding site.

Belongs to the cytochrome P450 family. Requires heme as cofactor.

It is found in the membrane. This chain is Probable cytochrome P450 519A1 (cyp519A1), found in Dictyostelium discoideum (Social amoeba).